Here is a 461-residue protein sequence, read N- to C-terminus: tRNA modification GTPase MnmE (461 aa).

The (6S)-5-formyl-5,6,7,8-tetrahydrofolate site is built by R21, E87, and K126. The TrmE-type G domain maps to 222–384 (QSTVVLYGEP…LLELLKSKLT (163 aa)). N232 serves as a coordination point for K(+). GTP is bound by residues 232–237 (NTGKSS), 251–257 (SDVPGTT), and 276–279 (DTAG). Residue S236 coordinates Mg(2+). The K(+) site is built by S251, V253, and T256. Mg(2+) is bound at residue T257. K461 serves as a coordination point for (6S)-5-formyl-5,6,7,8-tetrahydrofolate.

The protein belongs to the TRAFAC class TrmE-Era-EngA-EngB-Septin-like GTPase superfamily. TrmE GTPase family. Homodimer. Heterotetramer of two MnmE and two MnmG subunits. Requires K(+) as cofactor.

The protein resides in the cytoplasm. Functionally, exhibits a very high intrinsic GTPase hydrolysis rate. Involved in the addition of a carboxymethylaminomethyl (cmnm) group at the wobble position (U34) of certain tRNAs, forming tRNA-cmnm(5)s(2)U34. In Leptospira biflexa serovar Patoc (strain Patoc 1 / Ames), this protein is tRNA modification GTPase MnmE.